The sequence spans 188 residues: Protein SSX4 (188 aa).

The KRAB-related domain maps to 20–83; the sequence is KLRKAFDDIA…KRAADFHGND (64 aa). Residues 116–127 show a composition bias toward basic and acidic residues; the sequence is PAEEENGLKEVP. Residues 116-167 are disordered; the sequence is PAEEENGLKEVPEASGPQNDGKQLCPPGNPSTLEKINKTSGPKRGKHAWTHR. Polar residues predominate over residues 145–155; the sequence is PSTLEKINKTS. A compositionally biased stretch (basic residues) spans 156–167; sequence GPKRGKHAWTHR.

Belongs to the SSX family.

Could act as a modulator of transcription. This is Protein SSX4 (SSX4) from Homo sapiens (Human).